A 153-amino-acid chain; its full sequence is Ribonuclease H (153 aa).

In terms of domain architecture, RNase H type-1 spans 1-141; that stretch reads MKHIEIYTDG…CDVLARDAAS (141 aa). 4 residues coordinate Mg(2+): D9, E47, D69, and D133.

This sequence belongs to the RNase H family. Monomer. Mg(2+) is required as a cofactor.

It localises to the cytoplasm. It catalyses the reaction Endonucleolytic cleavage to 5'-phosphomonoester.. In terms of biological role, endonuclease that specifically degrades the RNA of RNA-DNA hybrids. The chain is Ribonuclease H from Pseudoalteromonas atlantica (strain T6c / ATCC BAA-1087).